The sequence spans 371 residues: tRNA-specific 2-thiouridylase MnmA (371 aa).

ATP contacts are provided by residues 14-21 (GMSGGVDS) and Met-40. Residues 100 to 102 (NPD) form an interaction with target base in tRNA region. Cys-105 functions as the Nucleophile in the catalytic mechanism. Residues Cys-105 and Cys-201 are joined by a disulfide bond. Gly-129 is a binding site for ATP. An interaction with tRNA region spans residues 151-153 (KDQ). The Cysteine persulfide intermediate role is filled by Cys-201. An interaction with tRNA region spans residues 309–310 (RY).

It belongs to the MnmA/TRMU family.

The protein localises to the cytoplasm. It carries out the reaction S-sulfanyl-L-cysteinyl-[protein] + uridine(34) in tRNA + AH2 + ATP = 2-thiouridine(34) in tRNA + L-cysteinyl-[protein] + A + AMP + diphosphate + H(+). Its function is as follows. Catalyzes the 2-thiolation of uridine at the wobble position (U34) of tRNA, leading to the formation of s(2)U34. This chain is tRNA-specific 2-thiouridylase MnmA, found in Halalkalibacterium halodurans (strain ATCC BAA-125 / DSM 18197 / FERM 7344 / JCM 9153 / C-125) (Bacillus halodurans).